The primary structure comprises 469 residues: Cytochrome c biogenesis protein CcsB (469 aa).

3 helical membrane-spanning segments follow: residues 30–50, 89–109, and 175–195; these read LRLA…GTVI, TPWF…CSLT, and IGPI…IWGS.

This sequence belongs to the Ccs1/CcsB family. In terms of assembly, may interact with CcsA.

The protein resides in the cellular thylakoid membrane. Required during biogenesis of c-type cytochromes (cytochrome c6 and cytochrome f) at the step of heme attachment. In Synechococcus sp. (strain JA-2-3B'a(2-13)) (Cyanobacteria bacterium Yellowstone B-Prime), this protein is Cytochrome c biogenesis protein CcsB.